The sequence spans 916 residues: Protein translocase subunit SecA (916 aa).

ATP contacts are provided by residues glutamine 88, 106-110, and aspartate 519; that span reads GEGKT. Zn(2+)-binding residues include cysteine 902, cysteine 904, cysteine 913, and cysteine 914.

It belongs to the SecA family. As to quaternary structure, monomer and homodimer. Part of the essential Sec protein translocation apparatus which comprises SecA, SecYEG and auxiliary proteins SecDF. Other proteins may also be involved. Zn(2+) is required as a cofactor.

It is found in the cell inner membrane. The protein resides in the cytoplasm. The enzyme catalyses ATP + H2O + cellular proteinSide 1 = ADP + phosphate + cellular proteinSide 2.. Functionally, part of the Sec protein translocase complex. Interacts with the SecYEG preprotein conducting channel. Has a central role in coupling the hydrolysis of ATP to the transfer of proteins into and across the cell membrane, serving as an ATP-driven molecular motor driving the stepwise translocation of polypeptide chains across the membrane. In Treponema pallidum (strain Nichols), this protein is Protein translocase subunit SecA.